Here is a 404-residue protein sequence, read N- to C-terminus: Cysteine desulfurase IscS (404 aa).

Pyridoxal 5'-phosphate is bound by residues 75–76, N155, Q183, and 203–205; these read AT and SAH. K206 is modified (N6-(pyridoxal phosphate)lysine). T243 lines the pyridoxal 5'-phosphate pocket. Catalysis depends on C328, which acts as the Cysteine persulfide intermediate. Residue C328 participates in [2Fe-2S] cluster binding.

Belongs to the class-V pyridoxal-phosphate-dependent aminotransferase family. NifS/IscS subfamily. In terms of assembly, homodimer. Forms a heterotetramer with IscU, interacts with other sulfur acceptors. It depends on pyridoxal 5'-phosphate as a cofactor.

It is found in the cytoplasm. The catalysed reaction is (sulfur carrier)-H + L-cysteine = (sulfur carrier)-SH + L-alanine. The protein operates within cofactor biosynthesis; iron-sulfur cluster biosynthesis. Functionally, master enzyme that delivers sulfur to a number of partners involved in Fe-S cluster assembly, tRNA modification or cofactor biosynthesis. Catalyzes the removal of elemental sulfur atoms from cysteine to produce alanine. Functions as a sulfur delivery protein for Fe-S cluster synthesis onto IscU, an Fe-S scaffold assembly protein, as well as other S acceptor proteins. The polypeptide is Cysteine desulfurase IscS (Neisseria meningitidis serogroup A / serotype 4A (strain DSM 15465 / Z2491)).